Here is a 588-residue protein sequence, read N- to C-terminus: Transcription factor tau 60 kDa subunit (588 aa).

Positions L399–M588 are sufficient for SPT15-binding.

In terms of assembly, heterodimer with TFC6. Component of the TFIIIC complex composed of TFC1, TFC3, TFC4, TFC6, TFC7 and TFC8. The subunits are organized in two globular domains, tauA and tauB, connected by a proteolysis-sensitive and flexible linker. Interacts with SPT15 and directly with TFC6.

It is found in the nucleus. In terms of biological role, TFIIIC mediates tRNA and 5S RNA gene activation by binding to intragenic promoter elements. Upstream of the transcription start site, TFIIIC assembles the initiation complex TFIIIB-TFIIIC-tDNA, which is sufficient for RNA polymerase III recruitment and function. Part of the tauB domain of TFIIIC that binds boxB DNA promoter sites of tRNA and similar genes. Plays a role in TFIIB assembly through its interaction with SPT15/TBP. Essential for cell viability. This is Transcription factor tau 60 kDa subunit (TFC8) from Saccharomyces cerevisiae (strain ATCC 204508 / S288c) (Baker's yeast).